Here is a 344-residue protein sequence, read N- to C-terminus: MRLGVLDVGSNTVHLLVVDAHRGGHPTPMSSTKATLRLAEATDSSGKITKRGADKLISTIDEFAKIAISSGCAELMAFATSAVRDAENSEDVLSRVRKETGVELQALRGEDESRLTFLAVRRWYGWSAGRILNLDIGGGSLEVSSGVDEEPEIALSLPLGAGRLTREWLPDDPPGRRRVAMLRDWLDAELAEPSVTVLEAGSPDLAVATSKTFRSLARLTGAAPSMAGPRVKRTLTANGLRQLIAFISRMTAVDRAELEGVSADRAPQIVAGALVAEASMRALSIEAVEICPWALREGLILRKLDSEADGTALIESSSVHTSVRAVGGQPADRNAANRSRGSKP.

Residues 319 to 344 (VHTSVRAVGGQPADRNAANRSRGSKP) form a disordered region.

Belongs to the GppA/Ppx family. As to quaternary structure, homodimer.

The catalysed reaction is [phosphate](n) + H2O = [phosphate](n-1) + phosphate + H(+). Degradation of inorganic polyphosphates (polyP). Releases orthophosphate processively from the ends of the polyP chain. The sequence is that of Exopolyphosphatase 1 from Mycobacterium bovis (strain ATCC BAA-935 / AF2122/97).